Here is a 418-residue protein sequence, read N- to C-terminus: Probable aminotransferase Rv1178 (418 aa).

The interval 22 to 42 is disordered; sequence GQGWHDRERPASGQGSGAAER.

It belongs to the class-I pyridoxal-phosphate-dependent aminotransferase family. Requires pyridoxal 5'-phosphate as cofactor.

The chain is Probable aminotransferase Rv1178 from Mycobacterium tuberculosis (strain ATCC 25618 / H37Rv).